Reading from the N-terminus, the 375-residue chain is Odorant receptor 49b (375 aa).

Over 1 to 28 (MFEDIQLIYMNIKILRFWALLYDKNLRR) the chain is Cytoplasmic. A helical membrane pass occupies residues 29–49 (YVCIGLASFHIFTQIVYMMST). Residues 50 to 60 (NEGLTGIIRNS) lie on the Extracellular side of the membrane. The chain crosses the membrane as a helical span at residues 61–77 (YMLVLWINTVLRAYLLL). Topologically, residues 78-121 (ADHDRYLALIQKLTEAYYDLLNLNDSYISEILDQVNKVGKLMAR) are cytoplasmic. Residues 122-142 (GNLFFGMLTSMGFGLYPLSSS) traverse the membrane as a helical segment. Topologically, residues 143 to 176 (ERVLPFGSKIPGLNEYESPYYEMWYIFQMLITPM) are extracellular. Residues 177–197 (GCCMYIPYTSLIVGLIMFGIV) traverse the membrane as a helical segment. The Cytoplasmic segment spans residues 198 to 251 (RCKALQHRLRQVALKHPYGDRDPRELREEIIACIRYQQSIIEYMDHINELTTMM). Residues 252-272 (FLFELMAFSALLCALLFMLII) traverse the membrane as a helical segment. The Extracellular segment spans residues 273–278 (VSGTSQ). A helical transmembrane segment spans residues 279-299 (LIIVCMYINMILAQILALYWY). The Cytoplasmic segment spans residues 300 to 342 (ANELREQNLAVATAAYETEWFTFDVPLRKNILFMMMRAQRPAA). A helical transmembrane segment spans residues 343 to 363 (ILLGNIRPITLELFQNLLNTT). Topologically, residues 364–375 (YTFFTVLKRVYG) are extracellular.

It belongs to the insect chemoreceptor superfamily. Heteromeric odorant receptor channel (TC 1.A.69) family. Or30a subfamily. As to quaternary structure, interacts with Orco. Complexes exist early in the endomembrane system in olfactory sensory neurons (OSNs), coupling these complexes to the conserved ciliary trafficking pathway. As to expression, expressed in olfactory sensory neurons in the antenna.

The protein localises to the cell membrane. In terms of biological role, odorant receptor which mediates acceptance or avoidance behavior, depending on its substrates. The odorant receptor repertoire encodes a large collection of odor stimuli that vary widely in identity, intensity, and duration. May form a complex with Orco to form odorant-sensing units, providing sensitive and prolonged odorant signaling and calcium permeability. This is Odorant receptor 49b (Or49b) from Drosophila melanogaster (Fruit fly).